Reading from the N-terminus, the 147-residue chain is Ribonuclease H (147 aa).

Positions 1 to 142 (MTEIVEIFTD…ADALARSAIT (142 aa)) constitute an RNase H type-1 domain. Residues Asp-10, Glu-48, Asp-70, and Asp-134 each coordinate Mg(2+).

This sequence belongs to the RNase H family. As to quaternary structure, monomer. It depends on Mg(2+) as a cofactor.

It localises to the cytoplasm. The enzyme catalyses Endonucleolytic cleavage to 5'-phosphomonoester.. Functionally, endonuclease that specifically degrades the RNA of RNA-DNA hybrids. The polypeptide is Ribonuclease H (Nitrosococcus oceani (strain ATCC 19707 / BCRC 17464 / JCM 30415 / NCIMB 11848 / C-107)).